Consider the following 382-residue polypeptide: Anhydro-N-acetylmuramic acid kinase (382 aa).

22-29 (GTSMDGVD) provides a ligand contact to ATP.

It belongs to the anhydro-N-acetylmuramic acid kinase family.

The enzyme catalyses 1,6-anhydro-N-acetyl-beta-muramate + ATP + H2O = N-acetyl-D-muramate 6-phosphate + ADP + H(+). It functions in the pathway amino-sugar metabolism; 1,6-anhydro-N-acetylmuramate degradation. The protein operates within cell wall biogenesis; peptidoglycan recycling. In terms of biological role, catalyzes the specific phosphorylation of 1,6-anhydro-N-acetylmuramic acid (anhMurNAc) with the simultaneous cleavage of the 1,6-anhydro ring, generating MurNAc-6-P. Is required for the utilization of anhMurNAc either imported from the medium or derived from its own cell wall murein, and thus plays a role in cell wall recycling. The chain is Anhydro-N-acetylmuramic acid kinase from Burkholderia ambifaria (strain ATCC BAA-244 / DSM 16087 / CCUG 44356 / LMG 19182 / AMMD) (Burkholderia cepacia (strain AMMD)).